The following is a 198-amino-acid chain: T-cell surface glycoprotein CD3 epsilon chain (198 aa).

An N-terminal signal peptide occupies residues Met1 to Gly21. Residues Gln22–Asp117 are Extracellular-facing. The Ig-like domain maps to Gln37 to Ala107. The cysteines at positions 49 and 89 are disulfide-linked. Residues Val118–Leu138 traverse the membrane as a helical segment. At Val139–Ile198 the chain is on the cytoplasmic side. Residues Pro152–Ile198 are disordered. The tract at residues Gln166–Arg183 is NUMB-binding region. Residues Glu169–Arg196 enclose the ITAM domain. The proline-rich sequence stretch occupies residues Arg170–Pro177. 2 positions are modified to phosphotyrosine: Tyr179 and Tyr190. Polar residues predominate over residues Asp188–Ile198.

In terms of assembly, the TCR-CD3 complex is composed of a CD3D/CD3E and a CD3G/CD3E heterodimers that preferentially associate with TCRalpha and TCRbeta, respectively, to form TCRalpha/CD3E/CD3G and TCRbeta/CD3G/CD3E trimers. In turn, the hexamer interacts with CD3Z homodimer to form the TCR-CD3 complex. Alternatively, TCRalpha and TCRbeta can be replaced by TCRgamma and TCRdelta. Interacts with CD6. Interacts (via Proline-rich sequence) with NCK1; the interaction is ligand dependent but independent of tyrosine kinase activation. Phosphorylated on Tyr residues after T-cell receptor triggering by LCK in association with CD4/CD8.

The protein localises to the cell membrane. In terms of biological role, part of the TCR-CD3 complex present on T-lymphocyte cell surface that plays an essential role in adaptive immune response. When antigen presenting cells (APCs) activate T-cell receptor (TCR), TCR-mediated signals are transmitted across the cell membrane by the CD3 chains CD3D, CD3E, CD3G and CD3Z. All CD3 chains contain immunoreceptor tyrosine-based activation motifs (ITAMs) in their cytoplasmic domain. Upon TCR engagement, these motifs become phosphorylated by Src family protein tyrosine kinases LCK and FYN, resulting in the activation of downstream signaling pathways. In addition of this role of signal transduction in T-cell activation, CD3E plays an essential role in correct T-cell development. Also participates in internalization and cell surface down-regulation of TCR-CD3 complexes via endocytosis sequences present in CD3E cytosolic region. In addition to its role as a TCR coreceptor, it serves as a receptor for ITPRIPL1. Ligand recognition inhibits T-cell activation by promoting interaction with NCK1, which prevents CD3E-ZAP70 interaction and blocks the ERK-NFkB signaling cascade and calcium influx. This chain is T-cell surface glycoprotein CD3 epsilon chain (CD3E), found in Macaca fascicularis (Crab-eating macaque).